Reading from the N-terminus, the 229-residue chain is Urease accessory protein UreF (229 aa).

It belongs to the UreF family. UreD, UreF and UreG form a complex that acts as a GTP-hydrolysis-dependent molecular chaperone, activating the urease apoprotein by helping to assemble the nickel containing metallocenter of UreC. The UreE protein probably delivers the nickel.

It is found in the cytoplasm. In terms of biological role, required for maturation of urease via the functional incorporation of the urease nickel metallocenter. This Staphylococcus aureus (strain USA300) protein is Urease accessory protein UreF.